A 275-amino-acid polypeptide reads, in one-letter code: Protein rolling stone (275 aa).

The next 6 membrane-spanning stretches (helical) occupy residues 45 to 65, 72 to 92, 127 to 147, 162 to 182, 185 to 205, and 232 to 252; these read LLYR…CVIV, FFIY…LISA, WLYN…WVFL, IITH…IAFP, ILHM…TLIY, and MVTF…LFGL.

In terms of tissue distribution, expressed in cells of the somatic mesoderm, most notably the muscle founder cells, between embryonic stages 12 and 14, in growing muscle fibers in dorsal, lateral and ventral positions. At stage 16 strongest expression is in some ventral muscles and muscle 8. At stages 16/17 expression is restricted to some cells of the CNS, the brain and the gonads.

The protein localises to the membrane. In terms of biological role, may have a central role in the fusion process during myogenesis, within the somatic mesoderm. The sequence is that of Protein rolling stone (rost) from Drosophila melanogaster (Fruit fly).